We begin with the raw amino-acid sequence, 414 residues long: Esterase FrsA (414 aa).

Belongs to the FrsA family.

The catalysed reaction is a carboxylic ester + H2O = an alcohol + a carboxylate + H(+). Functionally, catalyzes the hydrolysis of esters. The chain is Esterase FrsA from Shigella flexneri serotype 5b (strain 8401).